Consider the following 1211-residue polypeptide: PH domain-containing protein DDB_G0287875 (1211 aa).

The 86-residue stretch at 5 to 90 (QKKILKVFDQ…YKFFFLNPNG (86 aa)) folds into the Ras-associating 1 domain. Residues 103-112 (KSQSASTSGS) show a composition bias toward polar residues. Residues 103 to 133 (KSQSASTSGSAPPKKEPPKPQELQQKQHISK) are disordered. A PH domain is found at 132-223 (SKGKSGWLLR…WAQELQATMN (92 aa)). 2 consecutive Calponin-homology (CH) domains span residues 277–384 (TTLV…VGYF) and 392–502 (FNMR…LSGQ). Disordered stretches follow at residues 520–941 (VEPE…TESV) and 973–1110 (TSAT…PKNT). The stretch at 527 to 572 (SIRDKQLKLMREKKEEEDRLKKEKEEKEKEEKEKLEKESSAAAAAT) forms a coiled coil. The segment covering 528-565 (IRDKQLKLMREKKEEEDRLKKEKEEKEKEEKEKLEKES) has biased composition (basic and acidic residues). Low complexity-rich tracts occupy residues 566 to 596 (SAAA…PLKK), 607 to 646 (PPTV…TLTP), 655 to 668 (KKPA…KPVA), and 676 to 691 (PSSS…TTPS). The segment covering 703–729 (QLEKEKQDRLEKARLEKEKAEKEEQEF) has biased composition (basic and acidic residues). Positions 703 to 847 (QLEKEKQDRL…ERKHDENDMD (145 aa)) form a coiled coil. Positions 744-753 (LLEQQKQQQE) are enriched in low complexity. 2 stretches are compositionally biased toward basic and acidic residues: residues 754–778 (GQER…QRQI) and 786–853 (EARI…KLLE). The segment covering 862–877 (PTITPPQSLHSSQIIR) has biased composition (polar residues). Positions 880–909 (IEEDDQTNSELEMFQNEYNRLQDEEEHINS) form a coiled coil. Low complexity-rich tracts occupy residues 914–936 (GSSG…GASS) and 976–1010 (TTSD…TNNN). Residues 1032-1048 (TKEQQSIIDKQTGLVSK) are compositionally biased toward polar residues. Residues 1048-1076 (KQSTNNESNEQQQQQQQQQQLQQQQSSQN) adopt a coiled-coil conformation. Residues 1049–1083 (QSTNNESNEQQQQQQQQQQLQQQQSSQNSTTSIST) show a composition bias toward low complexity. Positions 1093–1104 (NEEKEKESEPHK) are enriched in basic and acidic residues. One can recognise a Ras-associating 2 domain in the interval 1112-1196 (GRVVVRICLE…DRFVFKKNDI (85 aa)).

The protein is PH domain-containing protein DDB_G0287875 of Dictyostelium discoideum (Social amoeba).